A 322-amino-acid chain; its full sequence is 2-methylene-furan-3-one reductase (322 aa).

Residues lysine 59, 174 to 175, 197 to 200, tyrosine 215, isoleucine 253, 264 to 266, 311 to 312, and 311 to 322 contribute to the NADP(+) site; these read GV, STKK, FVL, RA, and RATGKVVVYPIP. Substrate is bound at residue lysine 59.

The protein belongs to the zinc-containing alcohol dehydrogenase family. Quinone oxidoreductase subfamily. As to quaternary structure, monomer. In terms of processing, the N-terminus is blocked.

It carries out the reaction 4-hydroxy-2,5-dimethyl-furan-3(2H)-one + NADP(+) = 4-hydroxy-5-methyl-2-methylenefuran-3(2H)-one + NADPH + H(+). Its function is as follows. Enone oxidoreductase involved in the biosynthesis of 4-hydroxy-2,5-dimethyl-3(2H)-furanone (HDMF or furaneol), the key flavor compound in strawberries. Can use both NADH and NADPH as the electron donor. In Fragaria ananassa (Strawberry), this protein is 2-methylene-furan-3-one reductase (EO).